Here is an 828-residue protein sequence, read N- to C-terminus: Deubiquitinase MYSM1 (828 aa).

Positions M1 to G12 are enriched in acidic residues. A disordered region spans residues M1–V31. Position 110 is a phosphoserine (S110). The region spanning S116–V167 is the SANT domain. K187 participates in a covalent cross-link: Glycyl lysine isopeptide (Lys-Gly) (interchain with G-Cter in SUMO2). S218 carries the phosphoserine modification. A Phosphothreonine modification is found at T236. S242, S267, and S340 each carry phosphoserine. The 99-residue stretch at L372–R470 folds into the SWIRM domain. One can recognise an MPN domain in the interval V577–L709. The Zn(2+) site is built by H656, H658, and D669. Residues H656–D669 carry the JAMM motif motif. The LXXLL motif signature appears at L774–L778.

The protein belongs to the peptidase M67A family. MYSM1 subfamily. Component of a large chromatin remodeling complex, at least composed of MYSM1, PCAF, RBM10 and KIF11/TRIP5. Binds histones. Interacts with NFIL3; this interaction is critical for their correct recruitment to the ID2 locus during natural killer cell maturation.

The protein resides in the nucleus. The protein localises to the cytoplasm. Functionally, metalloprotease with deubiquitinase activity that plays important regulator roles in hematopoietic stem cell function, blood cell production and immune response. Participates in the normal programming of B-cell responses to antigen after the maturation process. Within the cytoplasm, plays critical roles in the repression of innate immunity and autoimmunity. Removes 'Lys-63'-linked polyubiquitins from TRAF3 and TRAF6 complexes. Attenuates NOD2-mediated inflammation and tissue injury by promoting 'Lys-63'-linked deubiquitination of RIPK2 component. Suppresses the CGAS-STING1 signaling pathway by cleaving STING1 'Lys-63'-linked ubiquitin chains. In the nucleus, acts as a hematopoietic transcription regulator derepressing a range of genes essential for normal stem cell differentiation including EBF1 and PAX5 in B-cells, ID2 in NK-cell progenitor or FLT3 in dendritic cell precursors. Deubiquitinates monoubiquitinated histone H2A, a specific tag for epigenetic transcriptional repression, leading to dissociation of histone H1 from the nucleosome. The sequence is that of Deubiquitinase MYSM1 (MYSM1) from Homo sapiens (Human).